We begin with the raw amino-acid sequence, 367 residues long: Germination protease (367 aa).

Positions 1–15 are excised as a propeptide; sequence MKEPLDLSKYAVRTD.

Belongs to the peptidase A25 family. As to quaternary structure, homotetramer. In terms of processing, autoproteolytically processed. The inactive tetrameric zymogen termed p46 autoprocesses to a smaller form termed p41, which is active only during spore germination.

It catalyses the reaction Endopeptidase action with P4 Glu or Asp, P1 preferably Glu &gt; Asp, P1' hydrophobic and P2' Ala.. Its function is as follows. Initiates the rapid degradation of small, acid-soluble proteins during spore germination. The sequence is that of Germination protease from Bacillus cytotoxicus (strain DSM 22905 / CIP 110041 / 391-98 / NVH 391-98).